Reading from the N-terminus, the 323-residue chain is tRNA dimethylallyltransferase (323 aa).

Glycine 12–threonine 19 serves as a coordination point for ATP. Threonine 14 to threonine 19 serves as a coordination point for substrate. Interaction with substrate tRNA stretches follow at residues aspartate 37–leucine 40 and glutamine 161–arginine 165.

It belongs to the IPP transferase family. In terms of assembly, monomer. Mg(2+) is required as a cofactor.

The catalysed reaction is adenosine(37) in tRNA + dimethylallyl diphosphate = N(6)-dimethylallyladenosine(37) in tRNA + diphosphate. Functionally, catalyzes the transfer of a dimethylallyl group onto the adenine at position 37 in tRNAs that read codons beginning with uridine, leading to the formation of N6-(dimethylallyl)adenosine (i(6)A). The protein is tRNA dimethylallyltransferase of Pseudomonas putida (strain ATCC 700007 / DSM 6899 / JCM 31910 / BCRC 17059 / LMG 24140 / F1).